A 465-amino-acid polypeptide reads, in one-letter code: Cystathionine beta-lyase (465 aa).

The residue at position 213 (K213) is an N6-(pyridoxal phosphate)lysine.

It belongs to the trans-sulfuration enzymes family. Pyridoxal 5'-phosphate serves as cofactor.

The protein resides in the cytoplasm. Its subcellular location is the nucleus. It carries out the reaction L,L-cystathionine + H2O = L-homocysteine + pyruvate + NH4(+). The enzyme catalyses an S-substituted L-cysteine + H2O = a thiol + pyruvate + NH4(+). It participates in amino-acid biosynthesis; L-methionine biosynthesis via de novo pathway; L-homocysteine from L-cystathionine: step 1/1. This is Cystathionine beta-lyase (STR3) from Saccharomyces cerevisiae (strain ATCC 204508 / S288c) (Baker's yeast).